Consider the following 122-residue polypeptide: MVQMQTYLTVADNTGGKIAQCIKVLGGSKRRYAKVGDIIVIAVKQAIPNSPVKKGDVHKAVIIRTSKEIRRKNGTYVRFDDNACVILDANLNPRGKRVFGPVARELRDANFMKVVSLASEVI.

Belongs to the universal ribosomal protein uL14 family. Part of the 50S ribosomal subunit. Forms a cluster with proteins L3 and L19. In the 70S ribosome, L14 and L19 interact and together make contacts with the 16S rRNA in bridges B5 and B8.

Its function is as follows. Binds to 23S rRNA. Forms part of two intersubunit bridges in the 70S ribosome. This chain is Large ribosomal subunit protein uL14, found in Borrelia recurrentis (strain A1).